Here is a 168-residue protein sequence, read N- to C-terminus: uncharacterized protein (168 aa).

2 consecutive transmembrane segments (helical) span residues asparagine 27–glycine 47 and isoleucine 147–phenylalanine 167.

It localises to the membrane. This is an uncharacterized protein from Saccharomyces cerevisiae (strain ATCC 204508 / S288c) (Baker's yeast).